The primary structure comprises 103 residues: G0/G1 switch protein 2 (103 aa).

In terms of assembly, directly interacts with BCL2; this interaction prevents the formation of the anti-apoptotic BAX-BCL2 complex.

Its subcellular location is the mitochondrion. Promotes apoptosis by binding to BCL2, hence preventing the formation of protective BCL2-BAX heterodimers. The protein is G0/G1 switch protein 2 (G0s2) of Mus musculus (Mouse).